Reading from the N-terminus, the 150-residue chain is Small ribosomal subunit protein bS6 (150 aa).

Residues 92–150 (KGINKPAKPKKTFKKTFVARKFSRDDESKTHSTEEPRRANTKSTYKKSTSFSQDNKNKK) are disordered. Residues 98 to 109 (AKPKKTFKKTFV) show a composition bias toward basic residues. Residues 113–129 (FSRDDESKTHSTEEPRR) are compositionally biased toward basic and acidic residues. Residues 132-141 (TKSTYKKSTS) show a composition bias toward low complexity.

The protein belongs to the bacterial ribosomal protein bS6 family.

In terms of biological role, binds together with bS18 to 16S ribosomal RNA. The polypeptide is Small ribosomal subunit protein bS6 (Mycoplasmopsis pulmonis (strain UAB CTIP) (Mycoplasma pulmonis)).